A 179-amino-acid chain; its full sequence is Iron sulfur cluster assembly protein 1, mitochondrial (179 aa).

The tract at residues 160 to 179 (RSVKQPTLGPEAAQAETIAT) is disordered.

It belongs to the NifU family. In terms of assembly, component of the core Fe-S cluster (ISC) assembly machinery. It depends on [2Fe-2S] cluster as a cofactor.

The protein localises to the mitochondrion matrix. It participates in cofactor biosynthesis; iron-sulfur cluster biosynthesis. Scaffold protein for the de novo synthesis of iron-sulfur (Fe-S) clusters within mitochondria, which is required for maturation of both mitochondrial and cytoplasmic [2Fe-2S] and [4Fe-4S] proteins. First, a [2Fe-2S] cluster is transiently assembled on the scaffold protein ISU1. In a second step, the cluster is released from ISU1, transferred to a glutaredoxin, followed by the formation of mitochondrial [2Fe-2S] proteins, the synthesis of [4Fe-4S] clusters and their target-specific insertion into the recipient apoproteins. Cluster assembly on ISU1 depends on the function of the cysteine desulfurase complex NFS1-ISD11, which serves as the sulfur donor for cluster synthesis, the iron-binding protein frataxin as the putative iron donor, and the electron transfer chain comprised of ferredoxin reductase and ferredoxin, which receive their electrons from NADH. This chain is Iron sulfur cluster assembly protein 1, mitochondrial (ISU1), found in Debaryomyces hansenii (strain ATCC 36239 / CBS 767 / BCRC 21394 / JCM 1990 / NBRC 0083 / IGC 2968) (Yeast).